We begin with the raw amino-acid sequence, 128 residues long: Large ribosomal subunit protein bL12 (128 aa).

It belongs to the bacterial ribosomal protein bL12 family. Homodimer. Part of the ribosomal stalk of the 50S ribosomal subunit. Forms a multimeric L10(L12)X complex, where L10 forms an elongated spine to which 2 to 4 L12 dimers bind in a sequential fashion. Binds GTP-bound translation factors.

Its function is as follows. Forms part of the ribosomal stalk which helps the ribosome interact with GTP-bound translation factors. Is thus essential for accurate translation. The sequence is that of Large ribosomal subunit protein bL12 from Brachyspira hyodysenteriae (strain ATCC 49526 / WA1).